The sequence spans 199 residues: Superoxide dismutase [Mn/Fe] 1 (199 aa).

Residues His27, His81, Asp161, and His165 each coordinate Fe(3+). Mn(2+) is bound by residues His27, His81, Asp161, and His165.

Belongs to the iron/manganese superoxide dismutase family. As to quaternary structure, homodimer. Can also form a heterodimer with SodM. Requires Mn(2+) as cofactor. Fe(3+) is required as a cofactor.

It catalyses the reaction 2 superoxide + 2 H(+) = H2O2 + O2. Its function is as follows. Destroys superoxide anion radicals which are normally produced within the cells and which are toxic to biological systems. Catalyzes the dismutation of superoxide anion radicals into O2 and H2O2 by successive reduction and oxidation of the transition metal ion at the active site. This is Superoxide dismutase [Mn/Fe] 1 (sodA) from Staphylococcus aureus (strain USA300).